We begin with the raw amino-acid sequence, 95 residues long: Citrate lyase acyl carrier protein (95 aa).

S14 carries the O-(phosphoribosyl dephospho-coenzyme A)serine modification.

This sequence belongs to the CitD family. In terms of assembly, oligomer with a subunit composition of (alpha,beta,gamma)6.

It localises to the cytoplasm. Its function is as follows. Covalent carrier of the coenzyme of citrate lyase. The sequence is that of Citrate lyase acyl carrier protein from Haemophilus ducreyi (strain 35000HP / ATCC 700724).